The following is a 1922-amino-acid chain: MDNNNNNNNNNNDKNDKNELNKIKVAIRVRPLNSRELGIDQKIPWSISKDTISLSQNPNINFTYDYVFGIDSNTIDVYNAIAKSIVNSSLNGINGTIFAYGQTSSGKTFSMRGTESIPGIIKLSIKDIFKSIEDSILEKDYLLKVSYLEIYNEEIKDLLNPTISNKKKLKIHEDIYKGVVVANLKEEIVISPDQIFALMNFGEERRHIGSTMMNDSSSRSHTIFRMQIQSTCKQNGTIQMSTLTLVDLAGSERVSSTGAEGVRLKEGTHINKSLMTLSKVISKLSEEKTQQHVPYRDSKLTRILQPSLGGNSKTAILCTITPATTHQEESISTLQFAKRAKRVKTNYKINQVADANTMLKKYESEILELQNQLVKSEEINSLLRNTISTQEISSNNFKLGMKRFNDAIIGGSLINENKKKKKRRNTLDPSYLLKDKIIKKKIRKSENQKIKKIKNSENNISSSSSNSSGEEDDDDKDDENNYSINQDDKDDSNYEDDDDEDEDDDEESDTDNEDDEDNDEDNDDDDDDDDEFKDNLNLIEPLDDETIKKIKDLDDSLGISGQVKVKREDLDLIYEELEENKKLIEEYESTLELLNNQLDEKEIEHKELLIIIDQWEQECTNRENQNQELLEIDQQSKQSIQQLNDKLLETKQQSKQSIDQLNLQLIDIESESSKNKKSFENVLGVFEKSYRLAERLEDKYFTKEIESKKQIETLANSYLQLETTYQQQLNINQQSQQKIQSLNNDIEQFKLVWVPLKDQVNGYFQENQMFKQYIIELEEKYNTLIDLQKEVEQNYLTNTLEQQRNDQYQIEINQLTTEYNNQIQQLESTNQKLQTQLYNLLANATQSTQTLEQQLQTSKQEIDTLTNEIEQLKNQYDIIRVDNDNLSKESLELKQILLSKTQQLEEQLSLAQQQKGNIEIIQQLESIIVDNQQSIDQLKIEFDQSQQDNQSIKQSYNQLESTLTLAQSENQRLLTENKQFITSLNEIKSLFNSIQQQKETIQLEFNQRLQSWSLDSEKYKEIISTLEQSNQKSIESYESKSLEFQEKENQFDSLLTNYNQLFSKYNDLATSNESNRLEFDQFKKDSNQSIQSLESLERSLKSENDNLLQQSNLLKSQLESIEKQKQDQLIPIQLELESKKCELSKLSSQFSEQTKQVTQLLISVDQYKISTNKLESQISDRNEEINNLKLKAIEINALKEENISLKDQLTKLKKAPKSQTDREKDMIKKELEKLREKFNAIDAKLKQAIQDKQTIQSEKQSLEREIKDLKRSHTSTETELDKLKKTHLAADVKSKDFIALNKSVEILTKSQEQLKSTIIELESDLSKKNIELEKKQEELVTLNQDKLEKEKKTNQLESDHSSATIKLENYENQITQLTSEIIDLKSKFQEFKSESESNIKQQEINLKESNDLNQQLTNDKFELTKQLSDLKVEFDKSKQLWSTRSSESNDTIKELQESIISKDKERQLTSEQLVKLTDQINLKTWEYNDLNSQCQQLTKTLQNVKSSNEQQEQSIVSLESQTSAKIKSLELEISQIQENHRLEVLELNRCKNQLSEKQTLMEQDNIQLNERIIQLLHQKTKHENEILSMESNIIDLENQTKELKSKIETAQQDFEIEKNYHTGLNETNTTTIKTMNEELTRSNQTIQQLLFKISKLEQTSLQTQQQQELQQATISAQQQKQQQLADDQEKQQLYQKIKLIEKELESTKQKNLYITEQFTLKESEYLDTITDYVCKEKEFEKSKASLKTSATKIQALNDIIKKLQEEKPQQQPVVKVSSSQVVNQNGQPIKSILKKPKLVIIPREQLQQPPQFKELTLSTLNSNDSNCEPESVSASSTLTSLQSISKYIGKRSEQTTLEHDLTSSTLNLPLQQQNKKVRLVITKNNKTSTDNLTTTSTSLKSKSSSNGENKENQNNNIIIKNN.

The Kinesin motor domain occupies 22–343; it reads KIKVAIRVRP…LQFAKRAKRV (322 aa). 101 to 108 serves as a coordination point for ATP; sequence GQTSSGKT. The segment at 448 to 538 is disordered; that stretch reads QKIKKIKNSE…DDEFKDNLNL (91 aa). Low complexity predominate over residues 456-468; sequence SENNISSSSSNSS. Acidic residues-rich tracts occupy residues 469 to 480 and 488 to 532; these read GEEDDDDKDDEN and DKDD…DDEF. Residues 562 to 1712 are a coiled coil; it reads QVKVKREDLD…ELESTKQKNL (1151 aa). The interval 1887 to 1922 is disordered; the sequence is TSTDNLTTTSTSLKSKSSSNGENKENQNNNIIIKNN.

This sequence belongs to the TRAFAC class myosin-kinesin ATPase superfamily. Kinesin family.

The protein resides in the cytoplasm. The protein localises to the cytoskeleton. In terms of biological role, microtubule-associated force-producing protein that plays a role in organelle transport. Its motor activity is directed toward the microtubule's plus end. Cooperates with dynein in organizing spindle assembly during cell division. The protein is Kinesin-related protein 4 (kif4) of Dictyostelium discoideum (Social amoeba).